The primary structure comprises 216 residues: Sperm microtubule inner protein 8 (216 aa).

In terms of assembly, microtubule inner protein component of sperm flagellar doublet microtubules. Expressed in testis, prostate and placenta.

The protein localises to the cytoplasm. Its subcellular location is the cytoskeleton. It localises to the flagellum axoneme. In terms of biological role, microtubule inner protein (MIP) part of the dynein-decorated doublet microtubules (DMTs) in flagellum axoneme. May serve to reinforce and thus stabilize the microtubule structure in the sperm flagella. In Homo sapiens (Human), this protein is Sperm microtubule inner protein 8.